The sequence spans 140 residues: Histone H2B (140 aa).

Residues 1-10 (MPPKAAEKKP) are compositionally biased toward basic and acidic residues. The tract at residues 1–48 (MPPKAAEKKPSTGGKAPAGKAPAEKKEAGKKTAAAASGEKKKRGKTRK) is disordered. An N6-acetyllysine; alternate mark is found at K8 and K9. Glycyl lysine isopeptide (Lys-Gly) (interchain with G-Cter in SUMO); alternate cross-links involve residues K8 and K9. Positions 11-21 (STGGKAPAGKA) are enriched in low complexity. K15 is modified (N6-acetyllysine). K25 carries the post-translational modification N6-acetyllysine; alternate. K25 is covalently cross-linked (Glycyl lysine isopeptide (Lys-Gly) (interchain with G-Cter in SUMO); alternate). Residue K26 forms a Glycyl lysine isopeptide (Lys-Gly) (interchain with G-Cter in SUMO) linkage. K134 is covalently cross-linked (Glycyl lysine isopeptide (Lys-Gly) (interchain with G-Cter in ubiquitin)).

The protein belongs to the histone H2B family. In terms of assembly, the nucleosome is a histone octamer containing two molecules each of H2A, H2B, H3 and H4 assembled in one H3-H4 heterotetramer and two H2A-H2B heterodimers. The octamer wraps approximately 147 bp of DNA. Monoubiquitinated by the ubc2-bre1 complex to form H2BK123ub1. H2BK123ub1 gives a specific tag for epigenetic transcriptional activation and is also prerequisite for H3K4me and H3K79me formation. H2BK123ub1 also modulates the formation of double-strand breaks during meiosis and is a prerequisite for DNA-damage checkpoint activation. Post-translationally, acetylated by gcn5 to form H2BK11ac and H2BK16ac. H2BK16ac can also be formed by esa1. Acetylation of N-terminal lysines and particularly formation of H2BK11acK16ac has a positive effect on transcription. In terms of processing, sumoylation to form H2BK6su or H2BK7su, and probably also H2BK16su or H2BK17su, occurs preferentially near the telomeres and represses gene transcription.

Its subcellular location is the nucleus. The protein resides in the chromosome. In terms of biological role, core component of nucleosome. Nucleosomes wrap and compact DNA into chromatin, limiting DNA accessibility to the cellular machineries which require DNA as a template. Histones thereby play a central role in transcription regulation, DNA repair, DNA replication and chromosomal stability. DNA accessibility is regulated via a complex set of post-translational modifications of histones, also called histone code, and nucleosome remodeling. This is Histone H2B (htbA) from Emericella nidulans (strain FGSC A4 / ATCC 38163 / CBS 112.46 / NRRL 194 / M139) (Aspergillus nidulans).